The following is a 202-amino-acid chain: Imidazoleglycerol-phosphate dehydratase (202 aa).

The protein belongs to the imidazoleglycerol-phosphate dehydratase family.

The protein resides in the cytoplasm. The catalysed reaction is D-erythro-1-(imidazol-4-yl)glycerol 3-phosphate = 3-(imidazol-4-yl)-2-oxopropyl phosphate + H2O. The protein operates within amino-acid biosynthesis; L-histidine biosynthesis; L-histidine from 5-phospho-alpha-D-ribose 1-diphosphate: step 6/9. This is Imidazoleglycerol-phosphate dehydratase from Acinetobacter baumannii (strain SDF).